A 66-amino-acid chain; its full sequence is Large ribosomal subunit protein bL33c (66 aa).

The protein belongs to the bacterial ribosomal protein bL33 family.

The protein localises to the plastid. It localises to the chloroplast. In Phalaenopsis aphrodite subsp. formosana (Moth orchid), this protein is Large ribosomal subunit protein bL33c.